A 452-amino-acid polypeptide reads, in one-letter code: Phosphoglucosamine mutase (452 aa).

Serine 101 serves as the catalytic Phosphoserine intermediate. Mg(2+) is bound by residues serine 101, aspartate 241, aspartate 243, and aspartate 245. The residue at position 101 (serine 101) is a Phosphoserine.

The protein belongs to the phosphohexose mutase family. It depends on Mg(2+) as a cofactor. In terms of processing, activated by phosphorylation.

It carries out the reaction alpha-D-glucosamine 1-phosphate = D-glucosamine 6-phosphate. Catalyzes the conversion of glucosamine-6-phosphate to glucosamine-1-phosphate. This Lactococcus lactis subsp. cremoris (strain SK11) protein is Phosphoglucosamine mutase.